A 4545-amino-acid chain; its full sequence is Prolow-density lipoprotein receptor-related protein 1 (4545 aa).

An N-terminal signal peptide occupies residues 1-19 (MLTPPLLLLLPLLSALVAG). The Extracellular portion of the chain corresponds to 20-4424 (ATMDAPKTCS…SQQQPGHMTS (4405 aa)). LDL-receptor class A domains follow at residues 27-66 (TCSP…EICP) and 72-110 (RCPP…AHCR). 6 disulfide bridges follow: C28/C41, C35/C54, C48/C65, C73/C86, C80/C99, and C93/C109. 5 N-linked (GlcNAc...) asparagine glycosylation sites follow: N115, N137, N186, N240, and N275. 3 LDL-receptor class B repeats span residues 293 to 335 (GNFY…DPAM), 336 to 379 (GKVF…DLVS), and 380 to 423 (RLVY…FENY). N358 is a glycosylation site (N-linked (GlcNAc...) asparagine). Residue N447 is glycosylated (N-linked (GlcNAc...) asparagine). LDL-receptor class B repeat units follow at residues 572-614 (GFIY…DWMG), 615-660 (DNLY…DPLN), 661-711 (GWMY…DIPA), and 712-755 (GRLY…HGNY). The HAT 1 repeat unit spans residues 639-671 (TRKTLIEGKMTHPRAIVVDPLNGWMYWTDWEED). N-linked (GlcNAc...) asparagine glycosylation occurs at N730. 8 consecutive LDL-receptor class A domains span residues 854–892 (QCQP…ALCH), 895–933 (TCPS…ATCS), 936–973 (TCPP…ASCA), 976–1013 (TCFP…AGCS), 1015–1053 (SCSS…ANCT), 1062–1099 (GCHS…KGCE), 1104–1142 (VCDP…ENCE), and 1145–1184 (ACRP…ELCD). Intrachain disulfides connect C855–C867, C862–C880, C874–C891, C896–C908, C903–C921, C915–C932, C937–C949, C944–C962, C956–C972, C977–C990, C985–C1003, C997–C1012, C1016–C1028, C1023–C1041, C1035–C1052, C1063–C1076, C1070–C1089, C1083–C1098, C1105–C1119, C1113–C1132, C1126–C1141, C1146–C1160, C1153–C1173, and C1167–C1183. The Ca(2+) site is built by W872, D875, D877, D879, D885, and E886. N-linked (GlcNAc...) asparagine glycosylation is present at N929. Ca(2+) is bound by residues W1033, D1036, D1038, D1040, D1046, and E1047. A glycan (N-linked (GlcNAc...) asparagine) is linked at N1051. 6 residues coordinate Ca(2+): W1081, D1084, D1086, D1088, D1094, and E1095. N1156 is a glycosylation site (N-linked (GlcNAc...) asparagine). 2 N-linked (GlcNAc...) asparagine glycosylation sites follow: N1196 and N1219. 5 LDL-receptor class B repeats span residues 1310-1356 (SALY…DWIA), 1357-1399 (GNIY…DPRD), 1400-1446 (GILF…DYLE), 1447-1491 (KRIL…YGGE), and 1492-1532 (VYWT…YHPS). HAT repeat units follow at residues 1380 to 1413 (TTLL…SLPR) and 1470 to 1503 (MEVL…NTLA). 5 N-linked (GlcNAc...) asparagine glycosylation sites follow: N1512, N1559, N1576, N1617, and N1646. LDL-receptor class B repeat units follow at residues 1628–1670 (QRVY…DWVS), 1671–1714 (RNLF…HPLR), 1715–1754 (GKLY…DFPE), and 1755–1799 (SKLY…MGDK). The HAT 4 repeat unit spans residues 1653-1684 (VVSADLPNAHGLAVDWVSRNLFWTSYDTNKKQ). N-linked (GlcNAc...) asparagine glycans are attached at residues N1724, N1734, N1764, N1826, and N1934. 4 LDL-receptor class B repeats span residues 1935–1977 (DTIY…DWIA), 1978–2020 (GNIY…HPEK), 2021–2064 (GYLF…DYQG), and 2065–2108 (GKLY…FEDF). N1996 is a glycosylation site (N-linked (GlcNAc...) asparagine). K2010 carries the post-translational modification N6-acetyllysine. A glycan (N-linked (GlcNAc...) asparagine) is linked at N2049. Residues N2118 and N2128 are each glycosylated (N-linked (GlcNAc...) asparagine). 5 LDL-receptor class B repeats span residues 2254-2295 (NRIF…HRGW), 2296-2344 (DTLY…DECQ), 2345-2389 (NLMF…DHRA), 2390-2432 (EKLY…YGEH), and 2433-2474 (IFWT…VAND). HAT repeat units follow at residues 2277–2309 (TTIV…STIT), 2325–2358 (TVIT…LHPS), and 2411–2444 (HRYV…RAVQ). Residues N2473, N2503, and N2522 are each glycosylated (N-linked (GlcNAc...) asparagine). LDL-receptor class A domains follow at residues 2524–2563 (SCRA…SYCN), 2566–2602 (RCKK…IPCN), 2605–2641 (ACGV…MNCS), 2639–2690 (NCSA…RDCP), 2696–2732 (RCPL…THCN), 2734–2771 (FCSE…AHCE), and 2774–2814 (TCGP…AGCL). Cystine bridges form between C2525–C2538, C2533–C2551, C2545–C2562, C2567–C2579, C2574–C2592, and C2586–C2601. N-linked (GlcNAc...) asparagine glycosylation occurs at N2602. Intrachain disulfides connect C2606/C2618, C2613/C2631, C2625/C2640, C2640/C2667, C2645/C2680, C2674/C2689, C2697/C2709, C2704/C2722, C2716/C2731, C2735/C2747, C2742/C2760, C2754/C2770, C2775/C2788, C2782/C2801, and C2795/C2813. N2621 and N2639 each carry an N-linked (GlcNAc...) asparagine glycan. A glycan (N-linked (GlcNAc...) asparagine) is linked at N2816. LDL-receptor class A domains lie at 2818–2855 (TCDD…PECE), 2858–2899 (TCGP…PHCT), and 2904–2941 (KCNA…RGCH). Cystine bridges form between C2819/C2831, C2826/C2844, C2838/C2854, C2859/C2871, C2866/C2885, C2879/C2898, C2905/C2918, C2913/C2931, C2925/C2940, C2987/C2997, and C2993/C3006. An N-linked (GlcNAc...) asparagine glycan is attached at N2906. An EGF-like 1; calcium-binding domain is found at 2983-3018 (DVDECSTTFPCSQLCINTHGSYKCLCVEGYAPRGGD). N-linked (GlcNAc...) asparagine glycosylation is found at N3049 and N3090. 5 LDL-receptor class B repeats span residues 3070 to 3114 (QMIY…DWVG), 3115 to 3157 (GNLY…DVQN), 3158 to 3201 (GYLY…DYVT), 3202 to 3244 (ERIY…FEDY), and 3245 to 3285 (VYWT…FHAL). HAT repeat units lie at residues 3128-3171 (EVSK…HSLI) and 3224-3256 (RHVV…KSIN). N-linked (GlcNAc...) asparagine glycosylation is found at N3265 and N3334. 11 consecutive LDL-receptor class A domains span residues 3334 to 3371 (NCTA…PDCP), 3374 to 3410 (KCRP…ANCD), 3413 to 3450 (VCLP…RDCP), 3453 to 3491 (TCAP…ANCT), 3494 to 3533 (TCGV…EECD), 3536 to 3572 (TCEP…ESCT), 3575 to 3611 (PCSE…KDCT), 3613 to 3649 (RCDM…EACG), 3654 to 3692 (TCPL…EECT), 3695 to 3733 (QCPP…EDCE), and 3741 to 3778 (HCKD…EDCS). Cystine bridges form between C3335-C3347, C3342-C3360, C3354-C3370, C3375-C3387, C3382-C3400, C3394-C3409, C3414-C3427, C3421-C3440, C3434-C3449, C3454-C3467, C3461-C3480, C3474-C3490, C3495-C3508, C3502-C3521, C3515-C3532, C3537-C3549, C3544-C3562, C3556-C3571, C3576-C3588, C3583-C3601, C3595-C3610, C3614-C3626, C3621-C3639, C3633-C3648, C3655-C3667, C3662-C3680, C3674-C3691, C3696-C3710, C3704-C3723, C3717-C3732, C3742-C3755, C3750-C3768, and C3762-C3777. A glycan (N-linked (GlcNAc...) asparagine) is linked at N3489. N3663 carries an N-linked (GlcNAc...) asparagine glycan. N3789 and N3840 each carry an N-linked (GlcNAc...) asparagine glycan. One copy of the LDL-receptor class B 31 repeat lies at 3913–3925 (GRVYWTNWHTGTI). N3954 carries an N-linked (GlcNAc...) asparagine glycan. LDL-receptor class B repeat units lie at residues 3971–4013 (GNVY…DPLR), 4014–4057 (GTMY…DYHN), and 4058–4102 (ERLY…FEDY). An HAT 10 repeat occupies 3995–4027 (TLISGMIDEPHAIVVDPLRGTMYWSDWGNHPKI). N-linked (GlcNAc...) asparagine glycosylation is found at N4076, N4126, and N4180. 4 consecutive EGF-like domains span residues 4197 to 4230 (RPGT…YTGD), 4233 to 4269 (ELDQ…PRCT), 4270 to 4302 (QQVC…FLGD), and 4305 to 4341 (QYRQ…TRCE). 10 cysteine pairs are disulfide-bonded: C4201-C4211, C4205-C4221, C4237-C4247, C4241-C4257, C4259-C4268, C4273-C4283, C4277-C4293, C4309-C4319, C4313-C4329, and C4331-C4340. N-linked (GlcNAc...) asparagine glycosylation is present at N4280. N4365 is a glycosylation site (N-linked (GlcNAc...) asparagine). An EGF-like 6 domain is found at 4376 to 4410 (LTCIDHCSNGGSCTMNSKMMPECQCPPHMTGPRCE). 3 disulfide bridges follow: C4378-C4388, C4382-C4398, and C4400-C4409. The helical transmembrane segment at 4425–4445 (ILIPLLLLLLLLLVAGVVFWY) threads the bilayer. Residues 4446–4545 (KRRVRGAKGF…PEDEIGDPLA (100 aa)) lie on the Cytoplasmic side of the membrane. Residues 4446–4545 (KRRVRGAKGF…PEDEIGDPLA (100 aa)) form an interaction with MAFB region. Residue T4461 is modified to Phosphothreonine. At Y4508 the chain carries Phosphotyrosine. S4518, S4521, and S4524 each carry phosphoserine.

The protein belongs to the LDLR family. Heterodimer of an 85-kDa membrane-bound carboxyl subunit and a non-covalently attached 515-kDa N-terminal subunit. Intracellular domain interacts with MAFB. Found in a complex with PID1/PCLI1, LRP1 and CUBNI. Interacts with SNX17, PID1/PCLI1, PDGF and CUBN. The intracellular domain interacts with SHC1, GULP1 and DAB1. Can weakly interact (via NPXY motif) with DAB2 (via PID domain); the interaction is enhanced by tyrosine phosphorylation of the NPXY motif. Interacts with MDK; promotes neuronal survival. Interacts with LRPAP1; this interaction is followed by rapid internalization. Interacts with uPA/PLAU and PAI1/SERPINE1, either individually or in complex with each other, leading to rapid endocytosis; this interaction is abolished in the presence of LRPAP1/RAP. Also interacts with tPA/PLAT alone or in complex with SERPINE1. Interacts with the urokinase receptor PLAUR; this interaction leads to PLAUR internalization and is impaired in the presence of SORL1. Interacts with PDGFB. Interacts with TAU/MAPT, leading to endocytosis; this interaction is reduced in the presence of LRPAP1/RAP. Interacts with IGFBP3. Interacts with ADGRG6. Post-translationally, cleaved into a 85 kDa membrane-spanning subunit (LRP-85) and a 515 kDa large extracellular domain (LRP-515) that remains non-covalently associated. Gamma-secretase-dependent cleavage of LRP-85 releases the intracellular domain from the membrane. Phosphorylated on serine and threonine residues. In terms of processing, phosphorylated on tyrosine residues upon stimulation with PDGF. Tyrosine phosphorylation promotes interaction with SHC1.

It localises to the cell membrane. The protein resides in the membrane. Its subcellular location is the coated pit. The protein localises to the golgi outpost. It is found in the cytoplasm. It localises to the cytoskeleton. The protein resides in the microtubule organizing center. Its subcellular location is the nucleus. In terms of biological role, endocytic receptor involved in endocytosis and in phagocytosis of apoptotic cells. Required for early embryonic development. Involved in cellular lipid homeostasis. Involved in the plasma clearance of chylomicron remnants and activated LRPAP1 (alpha 2-macroglobulin), as well as the local metabolism of complexes between plasminogen activators and their endogenous inhibitors. Acts as an LRPAP1 alpha-2-macroglobulin receptor. Acts as a TAU/MAPT receptor and controls the endocytosis of TAU/MAPT as well as its subsequent spread. May modulate cellular events, such as APP metabolism, kinase-dependent intracellular signaling, neuronal calcium signaling as well as neurotransmission. Also acts as a receptor for IGFBP3 to mediate cell growth inhibition. In Rattus norvegicus (Rat), this protein is Prolow-density lipoprotein receptor-related protein 1.